A 219-amino-acid polypeptide reads, in one-letter code: Probable GTP-binding protein EngB (219 aa).

One can recognise an EngB-type G domain in the interval 31–205 (VGVEIAFAGR…LSILNEWCHP (175 aa)). Residues 39–46 (GRSNAGKS), 66–70 (GRTQL), 84–87 (DLPG), 151–154 (TKSD), and 184–186 (FSS) contribute to the GTP site. Residues serine 46 and threonine 68 each coordinate Mg(2+).

The protein belongs to the TRAFAC class TrmE-Era-EngA-EngB-Septin-like GTPase superfamily. EngB GTPase family. Requires Mg(2+) as cofactor.

Necessary for normal cell division and for the maintenance of normal septation. The protein is Probable GTP-binding protein EngB of Shewanella denitrificans (strain OS217 / ATCC BAA-1090 / DSM 15013).